A 113-amino-acid polypeptide reads, in one-letter code: MNHYETVFILNPVLSEVQVKETVTKFEEFLTSRGAEMVSKEDWGLKKMAYEIQNKKSGFYHLFEFKVAGEVLIAFETEFRRDERVMRFLTVSLDKHAISWAERRRAKLKSTKA.

The protein belongs to the bacterial ribosomal protein bS6 family.

Functionally, binds together with bS18 to 16S ribosomal RNA. This Flavobacterium johnsoniae (strain ATCC 17061 / DSM 2064 / JCM 8514 / BCRC 14874 / CCUG 350202 / NBRC 14942 / NCIMB 11054 / UW101) (Cytophaga johnsonae) protein is Small ribosomal subunit protein bS6.